The following is a 397-amino-acid chain: Bifunctional enzyme IspD/IspF (397 aa).

The 2-C-methyl-D-erythritol 4-phosphate cytidylyltransferase stretch occupies residues 1 to 233 (MCAKKYKIAA…KLLFEEPKFR (233 aa)). Residues 233–397 (RVGAGYDIHK…VLLHTNFYWK (165 aa)) are 2-C-methyl-D-erythritol 2,4-cyclodiphosphate synthase. Residues aspartate 239 and histidine 241 each coordinate a divalent metal cation. 4-CDP-2-C-methyl-D-erythritol 2-phosphate-binding positions include 239-241 (DIH) and 270-271 (HS). An a divalent metal cation-binding site is contributed by histidine 278. 4-CDP-2-C-methyl-D-erythritol 2-phosphate contacts are provided by residues 292–294 (DIG), 368–371 (TTAE), tyrosine 375, and arginine 378.

In the N-terminal section; belongs to the IspD/TarI cytidylyltransferase family. IspD subfamily. This sequence in the C-terminal section; belongs to the IspF family. It depends on a divalent metal cation as a cofactor.

The catalysed reaction is 2-C-methyl-D-erythritol 4-phosphate + CTP + H(+) = 4-CDP-2-C-methyl-D-erythritol + diphosphate. The enzyme catalyses 4-CDP-2-C-methyl-D-erythritol 2-phosphate = 2-C-methyl-D-erythritol 2,4-cyclic diphosphate + CMP. It functions in the pathway isoprenoid biosynthesis; isopentenyl diphosphate biosynthesis via DXP pathway; isopentenyl diphosphate from 1-deoxy-D-xylulose 5-phosphate: step 2/6. The protein operates within isoprenoid biosynthesis; isopentenyl diphosphate biosynthesis via DXP pathway; isopentenyl diphosphate from 1-deoxy-D-xylulose 5-phosphate: step 4/6. Its function is as follows. Bifunctional enzyme that catalyzes the formation of 4-diphosphocytidyl-2-C-methyl-D-erythritol from CTP and 2-C-methyl-D-erythritol 4-phosphate (MEP) (IspD), and catalyzes the conversion of 4-diphosphocytidyl-2-C-methyl-D-erythritol 2-phosphate (CDP-ME2P) to 2-C-methyl-D-erythritol 2,4-cyclodiphosphate (ME-CPP) with a corresponding release of cytidine 5-monophosphate (CMP) (IspF). In Wolbachia pipientis wMel, this protein is Bifunctional enzyme IspD/IspF.